The primary structure comprises 124 residues: MARILGIDIPNNKRVEISLTYIYGIGKPRAQEILRKAKIDFNKRVKDLSDEELALIRSVASTYVLEGDLRRDVALNIKRLMEVGSYAGLRHRRGLPVRGQRTKSNARTRKGPRKTVANKKIESK.

Residues Arg92–Ala117 show a composition bias toward basic residues. Residues Arg92–Lys124 are disordered.

Belongs to the universal ribosomal protein uS13 family. Part of the 30S ribosomal subunit. Forms a loose heterodimer with protein S19. Forms two bridges to the 50S subunit in the 70S ribosome.

In terms of biological role, located at the top of the head of the 30S subunit, it contacts several helices of the 16S rRNA. In the 70S ribosome it contacts the 23S rRNA (bridge B1a) and protein L5 of the 50S subunit (bridge B1b), connecting the 2 subunits; these bridges are implicated in subunit movement. Contacts the tRNAs in the A and P-sites. The sequence is that of Small ribosomal subunit protein uS13 from Mycoplasmoides gallisepticum (strain R(low / passage 15 / clone 2)) (Mycoplasma gallisepticum).